We begin with the raw amino-acid sequence, 564 residues long: Proline--tRNA ligase (564 aa).

It belongs to the class-II aminoacyl-tRNA synthetase family. ProS type 1 subfamily. As to quaternary structure, homodimer.

It localises to the cytoplasm. It carries out the reaction tRNA(Pro) + L-proline + ATP = L-prolyl-tRNA(Pro) + AMP + diphosphate. Functionally, catalyzes the attachment of proline to tRNA(Pro) in a two-step reaction: proline is first activated by ATP to form Pro-AMP and then transferred to the acceptor end of tRNA(Pro). As ProRS can inadvertently accommodate and process non-cognate amino acids such as alanine and cysteine, to avoid such errors it has two additional distinct editing activities against alanine. One activity is designated as 'pretransfer' editing and involves the tRNA(Pro)-independent hydrolysis of activated Ala-AMP. The other activity is designated 'posttransfer' editing and involves deacylation of mischarged Ala-tRNA(Pro). The misacylated Cys-tRNA(Pro) is not edited by ProRS. This chain is Proline--tRNA ligase, found in Xylella fastidiosa (strain 9a5c).